Here is a 209-residue protein sequence, read N- to C-terminus: Protein phosphotransferase ChpT (209 aa).

At H22 the chain carries Phosphohistidine.

It belongs to the ChpT phosphotransferase family. As to quaternary structure, homodimer. Forms an asymmetric heterotetramer with CtrA (2:2). There are at least two modes of interaction between ChpT and CtrA, only one of which is competent to catalyze His-Asp phosphoryl transfer. Is phosphorylated by CckA-P on His-22.

It is found in the cytoplasm. In terms of biological role, component of a regulatory phosphorelay system that controls B.abortus cell growth, division, and intracellular survival inside mammalian host cells. This signaling pathway is composed of CckA, ChpT, CtrA and CpdR. ChpT efficiently and specifically shuttles phosphoryl groups from the CckA kinase to the receiver domains of both CtrA and CpdR. Does not bind ATP. Overexpression of chpT results in a defect in cell morphology, DNA content, and intracellular survival in human macrophages. In Brucella abortus (strain 2308), this protein is Protein phosphotransferase ChpT.